The primary structure comprises 256 residues: 5-keto-4-deoxy-D-glucarate aldolase (256 aa).

The active-site Proton acceptor is His50. Residue Gln151 coordinates substrate. Glu153 is a binding site for Mg(2+). 2 residues coordinate substrate: Ser178 and Asp179. Residue Asp179 coordinates Mg(2+).

It belongs to the HpcH/HpaI aldolase family. KDGluc aldolase subfamily. In terms of assembly, homohexamer; trimer of dimers. Mg(2+) serves as cofactor.

It carries out the reaction 5-dehydro-4-deoxy-D-glucarate = 2-hydroxy-3-oxopropanoate + pyruvate. The enzyme catalyses 2-dehydro-3-deoxy-D-glucarate = 2-hydroxy-3-oxopropanoate + pyruvate. Its pathway is carbohydrate acid metabolism; galactarate degradation; D-glycerate from galactarate: step 2/3. In terms of biological role, catalyzes the reversible retro-aldol cleavage of both 5-keto-4-deoxy-D-glucarate and 2-keto-3-deoxy-D-glucarate to pyruvate and tartronic semialdehyde. The chain is 5-keto-4-deoxy-D-glucarate aldolase from Escherichia fergusonii (strain ATCC 35469 / DSM 13698 / CCUG 18766 / IAM 14443 / JCM 21226 / LMG 7866 / NBRC 102419 / NCTC 12128 / CDC 0568-73).